Here is a 383-residue protein sequence, read N- to C-terminus: Succinyl-diaminopimelate desuccinylase (383 aa).

Residue histidine 79 coordinates Zn(2+). Aspartate 81 is a catalytic residue. Aspartate 110 contributes to the Zn(2+) binding site. The active-site Proton acceptor is the glutamate 141. Residues glutamate 142, glutamate 170, and histidine 355 each contribute to the Zn(2+) site.

Belongs to the peptidase M20A family. DapE subfamily. As to quaternary structure, homodimer. Requires Zn(2+) as cofactor. Co(2+) is required as a cofactor.

It catalyses the reaction N-succinyl-(2S,6S)-2,6-diaminopimelate + H2O = (2S,6S)-2,6-diaminopimelate + succinate. The protein operates within amino-acid biosynthesis; L-lysine biosynthesis via DAP pathway; LL-2,6-diaminopimelate from (S)-tetrahydrodipicolinate (succinylase route): step 3/3. Functionally, catalyzes the hydrolysis of N-succinyl-L,L-diaminopimelic acid (SDAP), forming succinate and LL-2,6-diaminopimelate (DAP), an intermediate involved in the bacterial biosynthesis of lysine and meso-diaminopimelic acid, an essential component of bacterial cell walls. The chain is Succinyl-diaminopimelate desuccinylase from Helicobacter pylori (strain ATCC 700392 / 26695) (Campylobacter pylori).